The sequence spans 363 residues: Ethanol acetyltransferase 1 (363 aa).

A mitochondrion-targeting transit peptide spans 1-19; it reads MLLAYTVRPSNWSFTRRAY. The region spanning 65-164 is the AB hydrolase-1 domain; it reads PIIFYHGLLG…FSAACIIDNS (100 aa). Active-site charge relay system residues include Ser-138, Asp-162, and His-313.

This sequence belongs to the AB hydrolase superfamily.

The protein resides in the mitochondrion. It catalyses the reaction ethanol + acetyl-CoA = ethyl acetate + CoA. It carries out the reaction acetyl-CoA + H2O = acetate + CoA + H(+). The enzyme catalyses ethyl acetate + H2O = ethanol + acetate + H(+). Functionally, alcohol acetyltransferase that catalyzes the synthesis of ethyl acetate from ethanol and acetyl-CoA. Can also function as a thioesterase by hydrolyzing acetyl-CoA in the absence of ethanol, as well as esterase hydrolyzing ethyl acetate. The sequence is that of Ethanol acetyltransferase 1 (EAT1) from Kluyveromyces marxianus (strain DMKU3-1042 / BCC 29191 / NBRC 104275) (Yeast).